Here is a 579-residue protein sequence, read N- to C-terminus: Peptidyl-prolyl cis-trans isomerase-like 2 (579 aa).

In terms of domain architecture, U-box spans Arg42–Lys115. The segment at Ala227–Ala261 is disordered. Residues Thr250 to His259 are compositionally biased toward polar residues. Positions Gln311–Ile470 constitute a PPIase cyclophilin-type domain. Positions Glu555–Asp579 are disordered.

The protein belongs to the cyclophilin-type PPIase family. PPIL2 subfamily.

It is found in the nucleus. It carries out the reaction [protein]-peptidylproline (omega=180) = [protein]-peptidylproline (omega=0). The enzyme catalyses S-ubiquitinyl-[E2 ubiquitin-conjugating enzyme]-L-cysteine + [acceptor protein]-L-lysine = [E2 ubiquitin-conjugating enzyme]-L-cysteine + N(6)-ubiquitinyl-[acceptor protein]-L-lysine.. It functions in the pathway protein modification; protein ubiquitination. In terms of biological role, may catalyze the cis-trans isomerization of proline imidic peptide bonds in oligopeptides thereby assisting the folding of proteins. May also function as a chaperone, playing a role in intracellular transport of proteins. May also have a protein ubiquitin ligase activity acting as an E3 ubiquitin protein ligase or as a ubiquitin-ubiquitin ligase promoting elongation of ubiquitin chains on proteins. This is Peptidyl-prolyl cis-trans isomerase-like 2 (cyp8) from Aspergillus fumigatus (strain ATCC MYA-4609 / CBS 101355 / FGSC A1100 / Af293) (Neosartorya fumigata).